A 101-amino-acid chain; its full sequence is UPF0473 protein SUB1774 (101 aa).

The protein belongs to the UPF0473 family.

This chain is UPF0473 protein SUB1774, found in Streptococcus uberis (strain ATCC BAA-854 / 0140J).